A 189-amino-acid chain; its full sequence is UPF0312 protein VV2_0231 (189 aa).

The first 22 residues, 1–22 (MRKSVIATGLALMMAVPFAANA), serve as a signal peptide directing secretion.

The protein belongs to the UPF0312 family. Type 1 subfamily.

The protein resides in the periplasm. This Vibrio vulnificus (strain CMCP6) protein is UPF0312 protein VV2_0231.